We begin with the raw amino-acid sequence, 381 residues long: NF-kappa-B inhibitor-like protein 1 (381 aa).

Positions 1–34 are disordered; it reads MSNPSPQAPEEEASTSVCRPQSCSMASASRRHRR. Residues 14–27 are compositionally biased toward polar residues; the sequence is STSVCRPQSCSMAS. ANK repeat units follow at residues 64–93 and 97–134; these read AGQP…ADPA and RHGD…IKNK. Disordered regions lie at residues 132 to 167 and 186 to 298; these read KNKD…REWR and EDDA…WRFG. Position 151 is a phosphoserine (serine 151). Acidic residues predominate over residues 151-160; sequence SAEEEEDEEV. 2 stretches are compositionally biased toward basic and acidic residues: residues 205–218 and 237–290; these read RLAR…RQQL and RQHE…RGAE.

As to quaternary structure, interacts with CACTIN (via N-terminal domain); the interaction occurs in a pro-inflammatory-independent manner. As to expression, high expression found in heart muscle, liver, kidney and skin. Not detected in spleen, lung and brain.

The protein localises to the nucleus. Involved in the regulation of innate immune response. Acts as negative regulator of Toll-like receptor and interferon-regulatory factor (IRF) signaling pathways. Contributes to the negative regulation of transcriptional activation of NF-kappa-B target genes in response to endogenous pro-inflammatory stimuli. In Mus musculus (Mouse), this protein is NF-kappa-B inhibitor-like protein 1 (Nfkbil1).